The chain runs to 505 residues: E3 SUMO-protein ligase PIAS4-A (505 aa).

Residues 12–46 (VKSFRVSDLQTLLASMGRSKSGLKQDLVGRALRLV) form the SAP domain. Positions 20-24 (LQTLL) match the LXXLL motif motif. Residue lysine 35 forms a Glycyl lysine isopeptide (Lys-Gly) (interchain with G-Cter in SUMO); alternate linkage. Residue lysine 35 forms a Glycyl lysine isopeptide (Lys-Gly) (interchain with G-Cter in SUMO2); alternate linkage. Residues lysine 56 and lysine 68 each participate in a glycyl lysine isopeptide (Lys-Gly) (interchain with G-Cter in SUMO2) cross-link. Residues 104-264 (GIPKPAPPPA…SVAVYLVRVF (161 aa)) enclose the PINIT domain. The SP-RING-type zinc finger occupies 296 to 381 (PESEIATTGL…LKETPEDVEE (86 aa)). Zn(2+) is bound by residues cysteine 327, histidine 329, cysteine 350, and cysteine 353. Residues 374–505 (ETPEDVEEIE…DYDKDLVTAY (132 aa)) are required for nuclear localization. Over residues 395-407 (DDKEKERERENSR) the composition is skewed to basic and acidic residues. The segment at 395–505 (DDKEKERERE…DYDKDLVTAY (111 aa)) is disordered. Over residues 437–457 (SGSGGASAGTGSTSGGSGGGT) the composition is skewed to gly residues. Acidic residues predominate over residues 462-485 (TLDDSSEEEGGGGAEDSEETDDSQ). Positions 493-505 (GRYDYDKDLVTAY) are enriched in basic and acidic residues.

Belongs to the PIAS family. Sumoylated. Lys-35 is the main site of sumoylation. Highly expressed in spleen, liver, and brain. Expressed at lower levels in heart, intestine, kidney, gill, skin, and muscle.

It localises to the nucleus. It catalyses the reaction S-ubiquitinyl-[E2 ubiquitin-conjugating enzyme]-L-cysteine + [acceptor protein]-L-lysine = [E2 ubiquitin-conjugating enzyme]-L-cysteine + N(6)-ubiquitinyl-[acceptor protein]-L-lysine.. The protein operates within protein modification; protein sumoylation. Functionally, functions as an E3-type small ubiquitin-like modifier (SUMO) ligase. May play a role as a transcriptional coregulator in various cellular pathways. Catalyzes conjugation of SUMO2 to KAT5 in response to DNA damage, facilitating repair of DNA double-strand breaks (DSBs) via homologous recombination (HR). Mediates sumoylation of PARP1 in response to PARP1 trapping to chromatin. Negatively regulates induction of interferon phi 1 (ifnphi1) mediated by mavs and ticam1/trif. Also inhibits ifnphi1-mediated activation of the interferon-stimulated genes (ISGs) pkz and cd40, and to a lesser extent rsad2 and isg15. May inhibit ticam1/trif-mediated activation of NF-kappa-B. This chain is E3 SUMO-protein ligase PIAS4-A, found in Danio rerio (Zebrafish).